A 159-amino-acid polypeptide reads, in one-letter code: Heavy metal-associated isoprenylated plant protein 28 (159 aa).

The region spanning 10–73 is the HMA domain; that stretch reads LQTIEMRVHM…KVRKTGRRAE (64 aa). The a metal cation site is built by C21 and C24. C156 carries the post-translational modification Cysteine methyl ester. C156 is lipidated: S-farnesyl cysteine. Positions 157 to 159 are cleaved as a propeptide — removed in mature form; the sequence is SIM.

It belongs to the HIPP family.

In terms of biological role, heavy-metal-binding protein. This Arabidopsis thaliana (Mouse-ear cress) protein is Heavy metal-associated isoprenylated plant protein 28.